We begin with the raw amino-acid sequence, 282 residues long: Bifunctional protein FolD (282 aa).

NADP(+)-binding positions include 165 to 167 (GAS) and Ile-231.

This sequence belongs to the tetrahydrofolate dehydrogenase/cyclohydrolase family. As to quaternary structure, homodimer.

The enzyme catalyses (6R)-5,10-methylene-5,6,7,8-tetrahydrofolate + NADP(+) = (6R)-5,10-methenyltetrahydrofolate + NADPH. It catalyses the reaction (6R)-5,10-methenyltetrahydrofolate + H2O = (6R)-10-formyltetrahydrofolate + H(+). The protein operates within one-carbon metabolism; tetrahydrofolate interconversion. Its function is as follows. Catalyzes the oxidation of 5,10-methylenetetrahydrofolate to 5,10-methenyltetrahydrofolate and then the hydrolysis of 5,10-methenyltetrahydrofolate to 10-formyltetrahydrofolate. The sequence is that of Bifunctional protein FolD from Francisella tularensis subsp. tularensis (strain FSC 198).